We begin with the raw amino-acid sequence, 193 residues long: Riboflavin kinase (193 aa).

Residues 1-59 are H-T-H motif-like; that stretch reads MGISQQAASQHLRELEDEGLITRNAEGKGISVMVTDKGRHELLRVYNILHDSLHSRPDH. Positions 60-193 are riboflavin kinase; it reads VEITGTLVSG…TIRIPLEQED (134 aa). CDP is bound at residue 69–74; that stretch reads GMNEGA. Mg(2+)-binding residues include threonine 98 and asparagine 100. FMN is bound by residues threonine 156 and glutamate 164. CDP is bound at residue 169–172; it reads LDIR.

The protein belongs to the archaeal riboflavin kinase family. Mg(2+) is required as a cofactor.

The catalysed reaction is riboflavin + CTP = CDP + FMN + H(+). It participates in cofactor biosynthesis; FMN biosynthesis; FMN from riboflavin (CTP route): step 1/1. Catalyzes the CTP-dependent phosphorylation of riboflavin (vitamin B2) to form flavin mononucleotide (FMN). In Cenarchaeum symbiosum (strain A), this protein is Riboflavin kinase (ribK).